The sequence spans 127 residues: Glycine cleavage system H protein (127 aa).

Residues 22-104 (EAVIGITQFA…YTDGWMVRVK (83 aa)) form the Lipoyl-binding domain. Lys63 bears the N6-lipoyllysine mark.

It belongs to the GcvH family. The glycine cleavage system is composed of four proteins: P, T, L and H. It depends on (R)-lipoate as a cofactor.

In terms of biological role, the glycine cleavage system catalyzes the degradation of glycine. The H protein shuttles the methylamine group of glycine from the P protein to the T protein. This is Glycine cleavage system H protein from Nitratidesulfovibrio vulgaris (strain DSM 19637 / Miyazaki F) (Desulfovibrio vulgaris).